Here is an 898-residue protein sequence, read N- to C-terminus: Putative aconitate hydratase, cytoplasmic (898 aa).

Residues glutamine 90 and 209–211 contribute to the substrate site; that span reads DSH. Positions 441, 507, and 510 each coordinate [4Fe-4S] cluster. Substrate is bound by residues arginine 540, arginine 545, arginine 703, and 784 to 785; that span reads SR.

It belongs to the aconitase/IPM isomerase family. [4Fe-4S] cluster is required as a cofactor.

It is found in the cytoplasm. The enzyme catalyses citrate = D-threo-isocitrate. It functions in the pathway carbohydrate metabolism; glyoxylate and dicarboxylate metabolism. In terms of biological role, catalyzes the isomerization of citrate to isocitrate via cis-aconitate. The chain is Putative aconitate hydratase, cytoplasmic from Oryza sativa subsp. japonica (Rice).